We begin with the raw amino-acid sequence, 476 residues long: Ribulose bisphosphate carboxylase large chain (476 aa).

Positions 116 and 166 each coordinate substrate. The Proton acceptor role is filled by Lys-168. Lys-170 contributes to the substrate binding site. Mg(2+) is bound by residues Lys-194, Asp-196, and Glu-197. The residue at position 194 (Lys-194) is an N6-carboxylysine. The active-site Proton acceptor is the His-286. Substrate-binding residues include Arg-287, His-319, and Ser-371.

The protein belongs to the RuBisCO large chain family. Type I subfamily. As to quaternary structure, heterohexadecamer of 8 large chains and 8 small chains. The cofactor is Mg(2+).

The enzyme catalyses 2 (2R)-3-phosphoglycerate + 2 H(+) = D-ribulose 1,5-bisphosphate + CO2 + H2O. It carries out the reaction D-ribulose 1,5-bisphosphate + O2 = 2-phosphoglycolate + (2R)-3-phosphoglycerate + 2 H(+). Its function is as follows. RuBisCO catalyzes two reactions: the carboxylation of D-ribulose 1,5-bisphosphate, the primary event in carbon dioxide fixation, as well as the oxidative fragmentation of the pentose substrate. Both reactions occur simultaneously and in competition at the same active site. This is Ribulose bisphosphate carboxylase large chain from Pseudonocardia dioxanivorans (strain ATCC 55486 / DSM 44775 / JCM 13855 / CB1190).